The primary structure comprises 197 residues: Chromophore lyase CpcT/CpeT (197 aa).

The protein belongs to the CpcT/CpeT biliprotein lyase family.

Its function is as follows. Covalently attaches a chromophore to Cys residue(s) of phycobiliproteins. The protein is Chromophore lyase CpcT/CpeT of Synechococcus sp. (strain WH8103).